The following is a 163-amino-acid chain: Neurotrophin-3 (163 aa).

An N-terminal signal peptide occupies residues 1-3; it reads IQS. Residues 4–119 constitute a propeptide that is removed on maturation; it reads TSMDQGILTE…VLNRTSRRKR (116 aa). Asn112 carries N-linked (GlcNAc...) asparagine glycosylation.

It belongs to the NGF-beta family.

The protein localises to the secreted. Its function is as follows. Seems to promote the survival of visceral and proprioceptive sensory neurons. The sequence is that of Neurotrophin-3 (NTF3) from Chilabothrus striatus (Haitian boa constrictor).